A 404-amino-acid chain; its full sequence is Endophilin-B2 (404 aa).

Residue Met-1 is modified to N-acetylmethionine. The tract at residues Met-1 to Phe-27 is membrane-binding amphipathic helix. Position 10 is a phosphoserine (Ser-10). One can recognise a BAR domain in the interval Glu-24 to Pro-291. Positions Ser-209–Thr-239 form a coiled coil. Residues Ser-344–Ser-404 enclose the SH3 domain. Ser-404 is subject to Phosphoserine.

The protein belongs to the endophilin family. Homodimer, and heterodimer with SH3GLB1.

The protein localises to the cytoplasm. The protein is Endophilin-B2 of Rattus norvegicus (Rat).